Consider the following 88-residue polypeptide: Long neurotoxin 31 (88 aa).

An N-terminal signal peptide occupies residues 1–21 (MKTLLLTLVVVTIVCLDLGNS). 5 disulfide bridges follow: C24-C42, C35-C63, C48-C52, C67-C78, and C79-C84.

It belongs to the three-finger toxin family. Long-chain subfamily. Type II alpha-neurotoxin sub-subfamily. As to expression, expressed by the venom gland.

The protein resides in the secreted. Binds with high affinity to muscular (alpha-1/CHRNA1) and neuronal (alpha-7/CHRNA7) nicotinic acetylcholine receptor (nAChR) and inhibits acetylcholine from binding to the receptor, thereby impairing neuromuscular and neuronal transmission. This Drysdalia coronoides (White-lipped snake) protein is Long neurotoxin 31.